The primary structure comprises 210 residues: Glycerol-3-phosphate acyltransferase 2 (210 aa).

Helical transmembrane passes span 4–24, 52–72, 73–93, 114–134, 141–161, and 163–183; these read LIMV…PAPY, VGFW…ALAM, AVAN…LMAI, IGIL…CFLI, FPTL…WLGQ, and DMGK…MYIP.

This sequence belongs to the PlsY family. In terms of assembly, probably interacts with PlsX.

It is found in the cell membrane. It catalyses the reaction an acyl phosphate + sn-glycerol 3-phosphate = a 1-acyl-sn-glycero-3-phosphate + phosphate. Its pathway is lipid metabolism; phospholipid metabolism. Catalyzes the transfer of an acyl group from acyl-phosphate (acyl-PO(4)) to glycerol-3-phosphate (G3P) to form lysophosphatidic acid (LPA). This enzyme utilizes acyl-phosphate as fatty acyl donor, but not acyl-CoA or acyl-ACP. This chain is Glycerol-3-phosphate acyltransferase 2, found in Dehalococcoides mccartyi (strain CBDB1).